The following is a 732-amino-acid chain: Translation initiation factor eIF2B subunit epsilon (732 aa).

Residues Gly559–Glu726 form the W2 domain.

The protein belongs to the eIF-2B gamma/epsilon subunits family. In terms of assembly, component of the translation initiation factor 2B (eIF2B) complex which is a heterodecamer of two sets of five different subunits: alpha, beta, gamma, delta and epsilon. Subunits alpha, beta and delta comprise a regulatory subcomplex and subunits epsilon and gamma comprise a catalytic subcomplex. Within the complex, the hexameric regulatory complex resides at the center, with the two heterodimeric catalytic subcomplexes bound on opposite sides.

It is found in the cytoplasm. The protein resides in the cytosol. Its function is as follows. Acts as a component of the translation initiation factor 2B (eIF2B) complex, which catalyzes the exchange of GDP for GTP on the eukaryotic initiation factor 2 (eIF2) complex gamma subunit. Its guanine nucleotide exchange factor activity is repressed when bound to eIF2 complex phosphorylated on the alpha subunit, thereby limiting the amount of methionyl-initiator methionine tRNA available to the ribosome and consequently global translation is repressed. The polypeptide is Translation initiation factor eIF2B subunit epsilon (GCD6) (Candida albicans (strain SC5314 / ATCC MYA-2876) (Yeast)).